Here is a 115-residue protein sequence, read N- to C-terminus: Probable malate:quinone oxidoreductase (115 aa).

The disordered stretch occupies residues 88-115; that stretch reads QMPAAAPTATAKPAETPREASPQHDMAL. The segment covering 90-101 has biased composition (low complexity); sequence PAAAPTATAKPA. Residues 102–115 show a composition bias toward basic and acidic residues; sequence ETPREASPQHDMAL.

It belongs to the MQO family. It depends on FAD as a cofactor.

It catalyses the reaction (S)-malate + a quinone = a quinol + oxaloacetate. Its pathway is carbohydrate metabolism; tricarboxylic acid cycle; oxaloacetate from (S)-malate (quinone route): step 1/1. The protein is Probable malate:quinone oxidoreductase (mqo) of Klebsiella pneumoniae.